The sequence spans 288 residues: Ribonuclease HIII (288 aa).

One can recognise an RNase H type-2 domain in the interval 76 to 288 (YSAIGSDEVG…KNITKQFIKN (213 aa)). Residues Asp82, Glu83, and Asp185 each contribute to the a divalent metal cation site.

It belongs to the RNase HII family. RnhC subfamily. The cofactor is Mn(2+). Mg(2+) is required as a cofactor.

It is found in the cytoplasm. It catalyses the reaction Endonucleolytic cleavage to 5'-phosphomonoester.. Functionally, endonuclease that specifically degrades the RNA of RNA-DNA hybrids. The polypeptide is Ribonuclease HIII (Phytoplasma mali (strain AT)).